Consider the following 193-residue polypeptide: 3-isopropylmalate dehydratase small subunit (193 aa).

It belongs to the LeuD family. LeuD type 1 subfamily. In terms of assembly, heterodimer of LeuC and LeuD.

It carries out the reaction (2R,3S)-3-isopropylmalate = (2S)-2-isopropylmalate. The protein operates within amino-acid biosynthesis; L-leucine biosynthesis; L-leucine from 3-methyl-2-oxobutanoate: step 2/4. Its function is as follows. Catalyzes the isomerization between 2-isopropylmalate and 3-isopropylmalate, via the formation of 2-isopropylmaleate. This is 3-isopropylmalate dehydratase small subunit from Bacillus cereus (strain AH820).